A 529-amino-acid polypeptide reads, in one-letter code: Bifunctional purine biosynthesis protein PurH (529 aa).

The region spanning 1–148 (MQQRRPIRRA…KNHKDVAIVV (148 aa)) is the MGS-like domain. Lys-287 bears the N6-acetyllysine mark.

It belongs to the PurH family.

It catalyses the reaction (6R)-10-formyltetrahydrofolate + 5-amino-1-(5-phospho-beta-D-ribosyl)imidazole-4-carboxamide = 5-formamido-1-(5-phospho-D-ribosyl)imidazole-4-carboxamide + (6S)-5,6,7,8-tetrahydrofolate. It carries out the reaction IMP + H2O = 5-formamido-1-(5-phospho-D-ribosyl)imidazole-4-carboxamide. It functions in the pathway purine metabolism; IMP biosynthesis via de novo pathway; 5-formamido-1-(5-phospho-D-ribosyl)imidazole-4-carboxamide from 5-amino-1-(5-phospho-D-ribosyl)imidazole-4-carboxamide (10-formyl THF route): step 1/1. Its pathway is purine metabolism; IMP biosynthesis via de novo pathway; IMP from 5-formamido-1-(5-phospho-D-ribosyl)imidazole-4-carboxamide: step 1/1. This chain is Bifunctional purine biosynthesis protein PurH, found in Escherichia coli O139:H28 (strain E24377A / ETEC).